The following is a 352-amino-acid chain: Phosphoribosylformylglycinamidine cyclo-ligase (352 aa).

The protein belongs to the AIR synthase family.

Its subcellular location is the cytoplasm. It carries out the reaction 2-formamido-N(1)-(5-O-phospho-beta-D-ribosyl)acetamidine + ATP = 5-amino-1-(5-phospho-beta-D-ribosyl)imidazole + ADP + phosphate + H(+). Its pathway is purine metabolism; IMP biosynthesis via de novo pathway; 5-amino-1-(5-phospho-D-ribosyl)imidazole from N(2)-formyl-N(1)-(5-phospho-D-ribosyl)glycinamide: step 2/2. This chain is Phosphoribosylformylglycinamidine cyclo-ligase, found in Pseudomonas fluorescens (strain ATCC BAA-477 / NRRL B-23932 / Pf-5).